A 178-amino-acid chain; its full sequence is MGRFSFNRYGYNTMQMESVESEKTRFEVECEFVQALANPNYLNFLAQRGYFKEEYFVNYLKYLLYWKDPQYARCLKFPQCLHMLEALQSQQFRDSMAYGPSAKFVEDQVVLQWQFYLRKRHRLCMMPDEGQELEESEDEADIRQKDTEDEDDEETMKKPDADTAEKNSTTSTVSKKEK.

Acidic residues predominate over residues 129–140; sequence EGQELEESEDEA. The interval 129 to 178 is disordered; it reads EGQELEESEDEADIRQKDTEDEDDEETMKKPDADTAEKNSTTSTVSKKEK. The segment covering 155 to 165 has biased composition (basic and acidic residues); sequence TMKKPDADTAE. Positions 166–178 are enriched in polar residues; it reads KNSTTSTVSKKEK.

It belongs to the Mediator complex subunit 31 family. In terms of assembly, component of the Mediator complex.

It is found in the nucleus. In terms of biological role, component of the Mediator complex, a coactivator involved in the regulated transcription of nearly all RNA polymerase II-dependent genes. Mediator functions as a bridge to convey information from gene-specific regulatory proteins to the basal RNA polymerase II transcription machinery. Mediator is recruited to promoters by direct interactions with regulatory proteins and serves as a scaffold for the assembly of a functional preinitiation complex with RNA polymerase II and the general transcription factors. The chain is Mediator of RNA polymerase II transcription subunit 31 from Caenorhabditis elegans.